A 273-amino-acid polypeptide reads, in one-letter code: Tryptase (273 aa).

The first 18 residues, 1–18 (MLKLLLLTLPLLSSLVHA), serve as a signal peptide directing secretion. The propeptide at 19-28 (APSLAMPREG) is activation peptide. In terms of domain architecture, Peptidase S1 spans 29-270 (IVGGQEASGN…YLDWIYRYVP (242 aa)). N49 carries N-linked (GlcNAc...) asparagine glycosylation. Cysteines 57 and 73 form a disulfide. Residues H72 and D119 each act as charge relay system in the active site. 3 disulfide bridges follow: C153-C228, C186-C209, and C218-C246. The Charge relay system role is filled by S222.

It belongs to the peptidase S1 family. Tryptase subfamily. As to quaternary structure, homotetramer. In terms of processing, glycosylated. In terms of tissue distribution, mast cells.

The protein localises to the secreted. The enzyme catalyses Preferential cleavage: Arg-|-Xaa, Lys-|-Xaa, but with more restricted specificity than trypsin.. Its function is as follows. Tryptase is the major neutral protease present in mast cells and is secreted upon the coupled activation-degranulation response of this cell type. May play a role in innate immunity. In Rattus norvegicus (Rat), this protein is Tryptase (Tpsab1).